Reading from the N-terminus, the 127-residue chain is Glycine cleavage system H protein (127 aa).

A Lipoyl-binding domain is found at 27-109 (TVRVGITHIA…YGEGWLYEVK (83 aa)). At K68 the chain carries N6-lipoyllysine.

It belongs to the GcvH family. As to quaternary structure, the glycine cleavage system is composed of four proteins: P, T, L and H. Requires (R)-lipoate as cofactor.

In terms of biological role, the glycine cleavage system catalyzes the degradation of glycine. The H protein shuttles the methylamine group of glycine from the P protein to the T protein. This Corynebacterium jeikeium (strain K411) protein is Glycine cleavage system H protein.